The chain runs to 180 residues: Large ribosomal subunit protein uL6 (180 aa).

The protein belongs to the universal ribosomal protein uL6 family. Part of the 50S ribosomal subunit.

In terms of biological role, this protein binds to the 23S rRNA, and is important in its secondary structure. It is located near the subunit interface in the base of the L7/L12 stalk, and near the tRNA binding site of the peptidyltransferase center. The polypeptide is Large ribosomal subunit protein uL6 (Desulforapulum autotrophicum (strain ATCC 43914 / DSM 3382 / VKM B-1955 / HRM2) (Desulfobacterium autotrophicum)).